We begin with the raw amino-acid sequence, 212 residues long: Pyridoxine/pyridoxamine 5'-phosphate oxidase (212 aa).

Residues 59 to 64, 74 to 75, Lys-81, and Gln-103 contribute to the FMN site; these read RMVLMK and YS. Residue Lys-64 participates in substrate binding. Substrate-binding residues include Tyr-121 and Arg-125. FMN contacts are provided by residues 138-139 and Trp-183; that span reads QS. A substrate-binding site is contributed by 189–191; it reads RLH. Arg-193 serves as a coordination point for FMN.

It belongs to the pyridoxamine 5'-phosphate oxidase family. Homodimer. FMN serves as cofactor.

The enzyme catalyses pyridoxamine 5'-phosphate + O2 + H2O = pyridoxal 5'-phosphate + H2O2 + NH4(+). The catalysed reaction is pyridoxine 5'-phosphate + O2 = pyridoxal 5'-phosphate + H2O2. It functions in the pathway cofactor metabolism; pyridoxal 5'-phosphate salvage; pyridoxal 5'-phosphate from pyridoxamine 5'-phosphate: step 1/1. It participates in cofactor metabolism; pyridoxal 5'-phosphate salvage; pyridoxal 5'-phosphate from pyridoxine 5'-phosphate: step 1/1. In terms of biological role, catalyzes the oxidation of either pyridoxine 5'-phosphate (PNP) or pyridoxamine 5'-phosphate (PMP) into pyridoxal 5'-phosphate (PLP). The protein is Pyridoxine/pyridoxamine 5'-phosphate oxidase of Rhodopseudomonas palustris (strain HaA2).